Consider the following 274-residue polypeptide: GPN-loop GTPase 3 (274 aa).

Residue 13–18 (GVGKST) coordinates GTP. The Gly-Pro-Asn (GPN)-loop; involved in dimer interface motif lies at 70–72 (GPN). 173–176 (SKID) is a binding site for GTP. Residues 255 to 274 (SESQEPKEPVEEIEEEVDFE) are disordered. Acidic residues predominate over residues 265-274 (EEIEEEVDFE).

It belongs to the GPN-loop GTPase family. As to quaternary structure, heterodimers with GPN1 or GPN2. Binds to RNA polymerase II (RNAPII).

In terms of biological role, small GTPase required for proper nuclear import of RNA polymerase II and III (RNAPII and RNAPIII). May act at an RNAP assembly step prior to nuclear import. This Debaryomyces hansenii (strain ATCC 36239 / CBS 767 / BCRC 21394 / JCM 1990 / NBRC 0083 / IGC 2968) (Yeast) protein is GPN-loop GTPase 3.